Here is a 38-residue protein sequence, read N- to C-terminus: Large ribosomal subunit protein bL36 (38 aa).

Belongs to the bacterial ribosomal protein bL36 family.

This is Large ribosomal subunit protein bL36 from Buchnera aphidicola subsp. Acyrthosiphon pisum (strain 5A).